The following is a 337-amino-acid chain: MIQKNWQELIKPNKVDFITHGSRTHATVVAEPLERGFGLTLGNALRRVLLSSLRGAAVTAVQIDGVLHEFSSIPGVREDVTDIVLNIKEIAIRMEGEGPKRMVVHKEGPGVVTAGDIQTVGDVEILNPEHVICTLDEGAEIRMEFTVNTGKGYVPADCNRAEDAPIGLIPVDSLYSPVRKVSYKIENTREGQVLDYDKLTLNIETNGSVTGEDAVAYAARILQDQLSIFVNFEEPQKEAPQEQVAELAFNPALLKKVDELELSVRSANCLKNDNIVYIGDLIQKTEAEMLRTPNFGRKSLNEIKEVLASMGLHLGMEIPAWPPENIEDLAKRYEDQY.

The tract at residues 1–233 (MIQKNWQELI…DQLSIFVNFE (233 aa)) is alpha N-terminal domain (alpha-NTD). The segment at 249 to 337 (FNPALLKKVD…DLAKRYEDQY (89 aa)) is alpha C-terminal domain (alpha-CTD).

It belongs to the RNA polymerase alpha chain family. Homodimer. The RNAP catalytic core consists of 2 alpha, 1 beta, 1 beta' and 1 omega subunit. When a sigma factor is associated with the core the holoenzyme is formed, which can initiate transcription.

It carries out the reaction RNA(n) + a ribonucleoside 5'-triphosphate = RNA(n+1) + diphosphate. Its function is as follows. DNA-dependent RNA polymerase catalyzes the transcription of DNA into RNA using the four ribonucleoside triphosphates as substrates. The sequence is that of DNA-directed RNA polymerase subunit alpha from Brucella melitensis biotype 2 (strain ATCC 23457).